We begin with the raw amino-acid sequence, 86 residues long: Weak toxin 1 (86 aa).

A signal peptide spans 1–23; that stretch reads MKTLLLTLVVVAIVCLDLGYTLT. 5 disulfides stabilise this stretch: Cys24/Cys45, Cys27/Cys32, Cys38/Cys63, Cys67/Cys78, and Cys79/Cys84.

The protein belongs to the three-finger toxin family. Ancestral subfamily. Orphan group II sub-subfamily. Expressed by the venom gland.

The protein localises to the secreted. Its function is as follows. Binds with low affinity to muscular (alpha-1-beta-1-delta-epsilon/CHRNA1-CHRNB1-CHRND-CHRNE) and very low affinity to neuronal (alpha-7/CHRNA7) nicotinic acetylcholine receptor (nAChR). The polypeptide is Weak toxin 1 (Bungarus candidus (Malayan krait)).